The chain runs to 127 residues: MKTVAGLLYSKDHEWVKVEGNEAYIGITDFAQHALGEIVFVELPEVDDEIAQGDAFSVVESVKAASDAYSPVSGKVLEVNEELDGAPELLNEDAFANWIIKVELTNPSELEGLLSDKEYAEFCEKEA.

The region spanning 22–103 (EAYIGITDFA…AFANWIIKVE (82 aa)) is the Lipoyl-binding domain. Lys63 carries the N6-lipoyllysine modification.

It belongs to the GcvH family. The glycine cleavage system is composed of four proteins: P, T, L and H. (R)-lipoate serves as cofactor.

Functionally, the glycine cleavage system catalyzes the degradation of glycine. The H protein shuttles the methylamine group of glycine from the P protein to the T protein. The sequence is that of Glycine cleavage system H protein from Alkaliphilus oremlandii (strain OhILAs) (Clostridium oremlandii (strain OhILAs)).